We begin with the raw amino-acid sequence, 185 residues long: Hypoxanthine/guanine phosphoribosyltransferase (185 aa).

It belongs to the purine/pyrimidine phosphoribosyltransferase family. Archaeal HPRT subfamily. As to quaternary structure, homodimer.

The protein resides in the cytoplasm. The enzyme catalyses IMP + diphosphate = hypoxanthine + 5-phospho-alpha-D-ribose 1-diphosphate. It carries out the reaction GMP + diphosphate = guanine + 5-phospho-alpha-D-ribose 1-diphosphate. Its pathway is purine metabolism; IMP biosynthesis via salvage pathway; IMP from hypoxanthine: step 1/1. Catalyzes a salvage reaction resulting in the formation of IMP that is energically less costly than de novo synthesis. The chain is Hypoxanthine/guanine phosphoribosyltransferase from Methanococcus vannielii (strain ATCC 35089 / DSM 1224 / JCM 13029 / OCM 148 / SB).